The following is a 648-amino-acid chain: Biosynthetic arginine decarboxylase (648 aa).

Lys109 is subject to N6-(pyridoxal phosphate)lysine. Position 291 to 301 (291 to 301 (LDVGGGLGVDY)) interacts with substrate.

This sequence belongs to the Orn/Lys/Arg decarboxylase class-II family. SpeA subfamily. The cofactor is Mg(2+). Pyridoxal 5'-phosphate serves as cofactor.

The enzyme catalyses L-arginine + H(+) = agmatine + CO2. The protein operates within amine and polyamine biosynthesis; agmatine biosynthesis; agmatine from L-arginine: step 1/1. Functionally, catalyzes the biosynthesis of agmatine from arginine. This Prochlorococcus marinus (strain MIT 9303) protein is Biosynthetic arginine decarboxylase.